We begin with the raw amino-acid sequence, 87 residues long: MADGFDIHIDQEQAARLKVVADRLGMSVSEYAVALIDAGLTGAAPKAIDPDPAIDEAIADAIERGDEPAISRDEFRAHIRRVTAGLG.

Functionally, antitoxin component of a type II toxin-antitoxin (TA) system. Neutralizes the effect of cognate toxin RelE1, but no other RelE or ParE toxin. The protein is Antitoxin RelB1 (relB1) of Caulobacter vibrioides (strain ATCC 19089 / CIP 103742 / CB 15) (Caulobacter crescentus).